Reading from the N-terminus, the 1221-residue chain is WEB family protein At4g27595, chloroplastic (1221 aa).

A disordered region spans residues 1-68; the sequence is MASRTKTGLM…VSDRRTARVP (68 aa). A chloroplast-targeting transit peptide spans 1–82; the sequence is MASRTKTGLM…ANYFLIIICM (82 aa). Residues 32–58 are compositionally biased toward polar residues; that stretch reads SDGNSPSPVQSTRLSIDRSPQTVNSKP. 3 coiled-coil regions span residues 95-149, 202-543, and 587-1084; these read TGLL…AAQH, TEEL…FNSK, and AAKE…GEEI. Residues 1073–1083 show a composition bias toward basic and acidic residues; that stretch reads EASSTHEKGEE. Residues 1073–1221 form a disordered region; sequence EASSTHEKGE…LLKKKSSSQK (149 aa). Residues 1084 to 1097 show a composition bias toward polar residues; the sequence is ITNTNPFDNSTGEQ. Basic and acidic residues-rich tracts occupy residues 1106–1116 and 1129–1160; these read AIDRHLKDDTT and KGEK…TEHD. Positions 1175–1187 are enriched in polar residues; that stretch reads NFDQLSNGLSLAE.

The protein belongs to the WEB family.

It localises to the plastid. Its subcellular location is the chloroplast. In Arabidopsis thaliana (Mouse-ear cress), this protein is WEB family protein At4g27595, chloroplastic.